The primary structure comprises 333 residues: Outer membrane protein assembly factor BamC (333 aa).

The first 18 residues, 1–18 (MKKCLFPLSVLAVIVATG), serve as a signal peptide directing secretion. Cys19 is lipidated: N-palmitoyl cysteine. The S-diacylglycerol cysteine moiety is linked to residue Cys19.

This sequence belongs to the BamC family. Part of the Bam complex.

The protein localises to the cell outer membrane. Its function is as follows. Part of the outer membrane protein assembly complex, which is involved in assembly and insertion of beta-barrel proteins into the outer membrane. This chain is Outer membrane protein assembly factor BamC, found in Actinobacillus succinogenes (strain ATCC 55618 / DSM 22257 / CCUG 43843 / 130Z).